Reading from the N-terminus, the 428-residue chain is Tryptophan synthase beta chain (428 aa).

At lysine 100 the chain carries N6-(pyridoxal phosphate)lysine.

This sequence belongs to the TrpB family. As to quaternary structure, tetramer of two alpha and two beta chains. Pyridoxal 5'-phosphate serves as cofactor.

The enzyme catalyses (1S,2R)-1-C-(indol-3-yl)glycerol 3-phosphate + L-serine = D-glyceraldehyde 3-phosphate + L-tryptophan + H2O. It participates in amino-acid biosynthesis; L-tryptophan biosynthesis; L-tryptophan from chorismate: step 5/5. Functionally, the beta subunit is responsible for the synthesis of L-tryptophan from indole and L-serine. This Streptomyces avermitilis (strain ATCC 31267 / DSM 46492 / JCM 5070 / NBRC 14893 / NCIMB 12804 / NRRL 8165 / MA-4680) protein is Tryptophan synthase beta chain.